The primary structure comprises 250 residues: tRNA pseudouridine synthase A (250 aa).

Asp52 functions as the Nucleophile in the catalytic mechanism. Residue Tyr110 participates in substrate binding.

This sequence belongs to the tRNA pseudouridine synthase TruA family. In terms of assembly, homodimer.

The catalysed reaction is uridine(38/39/40) in tRNA = pseudouridine(38/39/40) in tRNA. Formation of pseudouridine at positions 38, 39 and 40 in the anticodon stem and loop of transfer RNAs. This chain is tRNA pseudouridine synthase A, found in Citrifermentans bemidjiense (strain ATCC BAA-1014 / DSM 16622 / JCM 12645 / Bem) (Geobacter bemidjiensis).